Consider the following 1279-residue polypeptide: Cellulose synthase operon protein C (1279 aa).

Positions Met1–Ala21 are cleaved as a signal peptide. 10 TPR repeats span residues Gln27–Gln60, Asp62–Pro94, Ala218–Asp250, Val306–Ala339, Pro384–Asp417, Ala460–Asn493, Trp495–Gln527, Pro606–Pro639, Ala719–Asn752, and Pro787–Met820.

Its pathway is glycan metabolism; bacterial cellulose biosynthesis. In terms of biological role, required for maximal bacterial cellulose synthesis. In Pseudomonas fluorescens (strain SBW25), this protein is Cellulose synthase operon protein C (bscS).